Here is a 423-residue protein sequence, read N- to C-terminus: Pentamidine resistance factor, mitochondrial (423 aa).

The chain crosses the membrane as a helical span at residues 199–219 (PVFFTLVFIFEEVSVLIFTFF).

As to quaternary structure, interacts with COX18. This interaction may be essential for its insertion into mitochondrial inner membrane.

It localises to the mitochondrion inner membrane. Its function is as follows. Probably involved in mitochondrial export. Confers resistance to the anti-pneumocystis carinii drug pentamidine. May act by the removal of pentamidine, or its damage targets, from the matrix by an active-transport mechanism. This chain is Pentamidine resistance factor, mitochondrial (PNT1), found in Saccharomyces cerevisiae (strain ATCC 204508 / S288c) (Baker's yeast).